A 193-amino-acid chain; its full sequence is MTRLLGGRIEVICGCMFSGKTEELIRRLNHVRLARQRLIAFTPRRDTRYRLGSLVSHNGLSVEARVIDSIRDIPAYLDSDVDVVAVDELHLLDDPPDAAREVCQQLADRGLRVIVAGLDQDFRAQPFPAMAQLMAVAEQVDKLYAICVRCGAYATRSQRLIDGKPAPADAPTIVVGGQELYEARCRACYEPAQ.

ATP contacts are provided by residues G14 to T21 and D87 to H90. The active-site Proton acceptor is the E88. Zn(2+) contacts are provided by C147, C150, C185, and C188.

Belongs to the thymidine kinase family. In terms of assembly, homotetramer.

The protein resides in the cytoplasm. It carries out the reaction thymidine + ATP = dTMP + ADP + H(+). This is Thymidine kinase from Roseiflexus sp. (strain RS-1).